The primary structure comprises 1040 residues: Multidrug resistance protein MdtB (1040 aa).

12 consecutive transmembrane segments (helical) span residues 25–45 (LLMV…PVSA), 347–367 (LMMA…NIPA), 369–389 (IIPG…MVFL), 396–416 (LTLM…IVVI), 440–460 (IGFT…PLLF), 472–492 (FAIT…TLTP), 537–557 (WLTL…WVFI), 863–883 (LGST…VLGI), 888–908 (FIHP…ALLA), 911–931 (IAGS…IGIV), 968–988 (ILMT…STGV), and 998–1018 (IGMV…TPVI).

The protein belongs to the resistance-nodulation-cell division (RND) (TC 2.A.6) family. MdtB subfamily. Part of a tripartite efflux system composed of MdtA, MdtB and MdtC. MdtB forms a heteromultimer with MdtC.

Its subcellular location is the cell inner membrane. Its function is as follows. The MdtABC tripartite complex confers resistance against novobiocin and deoxycholate. This is Multidrug resistance protein MdtB from Escherichia coli O127:H6 (strain E2348/69 / EPEC).